We begin with the raw amino-acid sequence, 331 residues long: Major outer membrane protein P.IB (331 aa).

The N-terminal stretch at 1–19 (MKKSLIALTLAALPVAAMA) is a signal peptide.

It belongs to the Gram-negative porin family. In terms of assembly, homotrimer.

It localises to the cell outer membrane. In terms of biological role, serves as a slightly cation selective porin. The protein is Major outer membrane protein P.IB (porB) of Neisseria meningitidis serogroup B.